The primary structure comprises 220 residues: Guanylate kinase (220 aa).

One can recognise a Guanylate kinase-like domain in the interval 3–180; it reads GRLFVMTGAS…AVADFLAILT (178 aa). 10-17 lines the ATP pocket; that stretch reads GASGVGKG.

It belongs to the guanylate kinase family.

Its subcellular location is the cytoplasm. It catalyses the reaction GMP + ATP = GDP + ADP. Essential for recycling GMP and indirectly, cGMP. The chain is Guanylate kinase from Thermus thermophilus (strain ATCC BAA-163 / DSM 7039 / HB27).